The primary structure comprises 51 residues: Small integral membrane protein 38 (51 aa).

Residues 13–33 (PLLALLVVILLARLILWSCLG) traverse the membrane as a helical segment.

It is found in the membrane. The polypeptide is Small integral membrane protein 38 (Homo sapiens (Human)).